Consider the following 84-residue polypeptide: Defensin-like protein 116 (84 aa).

The first 24 residues, 1–24, serve as a signal peptide directing secretion; the sequence is MAITKNMLVVLLLTIIFVTSSVHC. Disulfide bonds link cysteine 40–cysteine 80, cysteine 46–cysteine 71, cysteine 55–cysteine 78, and cysteine 59–cysteine 79.

It belongs to the DEFL family.

It is found in the secreted. This Arabidopsis thaliana (Mouse-ear cress) protein is Defensin-like protein 116.